We begin with the raw amino-acid sequence, 263 residues long: MKKVTIRDIMKKYKNGEKIVMVTAYDYPFAKLVDEAGVDMILVGDSLGMVVLGYPSTNQVTMKDMLHHVAAVARANPKAMIVGDMPFGSYEVSEEEAVRNAVELVRAGAEAVKLEGGKEVADKVEAIVKAGIPVMGHLGLTPQKRHALGGYRLRGKTEEEARELLEDAKALEEAGVFSIVLEFVKAEVAKKITEEVGVPTICIGAGPWCSGQVLVIHDILGLAPFSPPFAKKYFDCGKAIVEAVKKFAEEVRSGEFPGEGYYW.

Mg(2+) is bound by residues D45 and D84. Residues 45–46 (DS), D84, and K113 contribute to the 3-methyl-2-oxobutanoate site. E115 lines the Mg(2+) pocket. E182 (proton acceptor) is an active-site residue.

It belongs to the PanB family. Homodecamer; pentamer of dimers. Requires Mg(2+) as cofactor.

The protein localises to the cytoplasm. It carries out the reaction 3-methyl-2-oxobutanoate + (6R)-5,10-methylene-5,6,7,8-tetrahydrofolate + H2O = 2-dehydropantoate + (6S)-5,6,7,8-tetrahydrofolate. It participates in cofactor biosynthesis; coenzyme A biosynthesis. In terms of biological role, catalyzes the reversible reaction in which hydroxymethyl group from 5,10-methylenetetrahydrofolate is transferred onto alpha-ketoisovalerate to form ketopantoate. This Ignicoccus hospitalis (strain KIN4/I / DSM 18386 / JCM 14125) protein is 3-methyl-2-oxobutanoate hydroxymethyltransferase.